The sequence spans 498 residues: ATP synthase subunit beta, chloroplastic (498 aa).

Residue 172-179 (GGAGVGKT) coordinates ATP.

Belongs to the ATPase alpha/beta chains family. As to quaternary structure, F-type ATPases have 2 components, CF(1) - the catalytic core - and CF(0) - the membrane proton channel. CF(1) has five subunits: alpha(3), beta(3), gamma(1), delta(1), epsilon(1). CF(0) has four main subunits: a(1), b(1), b'(1) and c(9-12).

It localises to the plastid. The protein resides in the chloroplast thylakoid membrane. The catalysed reaction is ATP + H2O + 4 H(+)(in) = ADP + phosphate + 5 H(+)(out). Produces ATP from ADP in the presence of a proton gradient across the membrane. The catalytic sites are hosted primarily by the beta subunits. This Spinacia oleracea (Spinach) protein is ATP synthase subunit beta, chloroplastic.